We begin with the raw amino-acid sequence, 4513 residues long: MEPGDEGKGHQLTADATCIAWVRSKLQLLKPESLGDSDGAEWLSSVWHNDVHTPVVSTFLMSVKATRMFAALDGGHEGGSSPKLVLALEVPKQFEQMVYFVRDPSKFVTRENVGSVIFFGVMRGGDPLHSLLNIMHGLYVPVVVANTTWPETVKSDFTAQMHKFMANLTETVYEVKGKTILYIPQEDLRDPKAAAKQKDLVQRLESTIIHWTRQVKELLNQQDSVDASEQAGPLAEIEFWRERSVDLSGIRAQLDDGAVSSIVSVLEYAKSSYLAPFLSLRNLIHREAVAAEDNLKFLLCLEEPCQQLASAHPQTIPSLLPPILNCIRMVWNLSRFYNTPERLSVLLRKLSNEIINRCCSVISLPDVWSGDVDNVMVALRQSMEAGERWKELYKRTAAAVAVRSPKPWDFDISSIFAHIDAFLQRCNDLLEVCEAQLQFAPRTPLPVFGGTYGPEVKKSILDIQESFQGLVQGLQALKYDILDVKATRWHDDFNGFKGGVKDLEVMMANVIQRAFDTQPCLAARGELLEGFQTMAKRDYIRRFVEKKTVEFFALFNAEINTVKKLFDAVKRSQPKSPILPRYAGLAKYAMNLMRRLEQSHKVVDSVRYTLPQVSEAADVMQQYELAHQAIEQYISNTHNDWFSTIESSIAKELQACLLTQDKASGGLLSMNFHKDLLSMGQEVHFWERMRLAVPLVAMEINAQREKYRVLRDNILMVVRDYNKILTALDKEERKLFHDRIRYLDRRIMPGVTKLQWTADKHALEFYYREARKFCRDADMAVGDYKTANSRLDAICRSISELVLVDVEKKKIYQHAEFANLQESHHAKIKDRLVSAVDEIRDIMASIHRVFEQDSEEVQREWVRFTQKVDRKLEDALRHVIKKSLQELSRLLNGDNKTEVMPIFHVTMVLERTNRVELRPTIQALFDTINSVARNLILVLQSVPRVALQLTDKQRRDMEDAGLPLPKPLPTLYETISADEDAVLRTIMQITSGITSIIDKVQAFLTYWEKKYRQVWEADRDAYIRRYEKAQKPLSSFEADISRYLQCIDEIRGEDGATNMRFLRIDCGPLKLTLVGHCEAWVSKFTGLLGQLAATELRTLHTYFRENKDSLMLAPSTLEQLAELVGLHRRLADERRRTEARFEPLRDKYKLLERYEVGAKEEEAALLEGLEPAWTQFQALLDETAGKLERYKDNFREKVKSLLDTFLKDVAQLCEDFSRDAPYSSEVPTPDALDFIQASKQADEDTRKRAAEIKNGMDIFNIPQPQYKDLAAMEKDLDFLDRIWGLKDEWEQLYYGWKDGSFTDIKVEEMEEAAVRIGKNVAKLGRDIRQWTVWSSLKDTLDAFKRTMPLITDLRNPAMRPRHWQNLQDHIGVRFDPHSRDFTLDSLVALRLDQHVEFVAELSVNATKELAIENNIKAIAATWSALGLDMAEYKSTFKLRSTEEIFTSLEENIVTLSTMKASKYFIVFEKDIAYWEKTLSHISETIEIILQVQRNWMYLENIFIGSEDIRKQLPQESQMFDAVHNNFMRLMKQLYSTANCLKACTAQGLLESFQDMNNKLERIQKSLDNYLENKRQQFPRFYFLSSDDLLEILGQAKDPLNVQPHLKKCFEGIKKLDMHLPGEDRKQTISVGITSPDGEYLPFANPVITEGRPEEWLNRVEDAMFLTTKKHLYKVLEESKAQKKEKWVKENQGQMIITAGQIVWTHECEKALADADSARKNLKLLKKKWISYLNKLTAVTRSKLNKIERNKVVALITIEVHARDVIEKLGKSNCSSTNDFEWVSQLRFYWDREKNDCIVKQVLSVFYYGYEYQGNNGRLVITPLTDRCYMTLGAAMFTRRGGNPLGPAGTGKTETVKDFGKALARYVIVFNCSDGVDYKMTGKMFSGLAQTGAWACLDEFNRIEVEVLSVVATQIAAVMQAIKESKKRFLFLGQEIRLNPSCGIFVTMNPGYAGRSELPDNLKAMLRPVSMMVPDFTLIAEIMMFSEGFSSAKVLAKKMIAIMELSQQQLSKQDHYDYGLRSFVIPIARAAGSLKRLDPEGSEEVILYRTMLDLIKPKLVYLDLPLFMALLSDLFPGVELPPADGGSLRRAIEAELRESNLQIVPEFVTKIIQVFDCKVARHGNMIVGRTGSGKSEAWKCLQRALGRLRKEEPDDDRFQKVHVHTINPLALSNDELYGCFEAATHEWQDGVLARIMRTVCKDETHEQKWILFDGPVDTLWIESMNTTLDDNKLLTLLSGERIAMTPAVSLLFEVEDLSQASPATVSRAGMIYLNVEDLGWRPFITSWLAAKQAAPGADAAIIDQVSKLVDKYMEAALEHKRLHCRELVPTDRLSCVRAFTRLWDALAVPENGVGTMPVDESAGPPGSKAAAAAAAAAAAAAPPEETSGGTGGNLVEMWFLFCLIWGIGGPLDEEGRKKFDAFMREMDTRYPSSDTVFEYFVEPKAKSWLAWETKLTGAFKPAMDQPFFKILVPTVDTVRNRFVGSALVRVSQHTLIVGNVGVGKTMIVGSLLEGLPGDRMSSMTINFSAQTSSNSLQDTIEGKLEKRTKGVFAPAGGKRLVCFIDDLNMPQKSKFGFIPPLELLKLWVDNGFWYDRAKCEVKHIKDMQLLAAMAPPGGGRNAFSQRVQACFATLNVTAPNDNQLKRIFGTILNAKLADFDDEVKPLSEPITMATIGIYRAVSKELLPTPSKSHYLFNTRDLAKIIQGMMQATKAFYNSKEEVLQLWCHECMRIIADRMWDHADKEWLVRQLDEKLGTTFSTSFGTLFEAYNETVPPFVTFMRQNVDVPVYEAVRDMVALKDLLTERLEDYALEPGHSAMDLVLFRDALSHVCRIHRILGQPRGNALLVGVGGSGRKSLARLAAFVAELKCFTIEITKNYRQTEFREDLKGLYRQAGVANKPTVFLFDETQIVYETFLEDVNNILTSGEVPNLFPKDELGSVLDELRPAAKAAGAGETADALYGFLLERVRTNLHVVLCLSPVGEAFRERCRMFPGLVNCTTIDWFTEWPADALFEVAQKQLMDVDLGSTEVKTAVCKVFVTAHQSVENTSAKMFAALKRRNYVTPTNYLETVRGYKGLLAEKRTELGEKAAKLQGGLHKLDETSVQVAAMKKVAEEKKVVVAQAKADCEELLVEIVQDKRVADEQEKQVNAEAQKIGKEAEEANIIAAQVQQELDKALPALREAEAALDVLTKKDMSELKAYAKPPEKVEMTLNAVLTVLRRPPNWDEAKKRLSDANFMQSLKEFDKDKLDDSLLKKIGKFTANPDFTYEKINTVSAAASGMCKWVHAMETYGYVAKDVAPKRAKLKSAQDTLARKQAALALAQEQLAVVLAKVQALKDKYDTSIARKQALEEELADLEGKLERAEKLVTGLAGERVRWEASISEYNIALGCLPGDVVVAAAFMSYAGPFPSEYRDELVKHTWLPQVKALNIPASEHFDFALFLANPAMVRDWNIQGLPSDSFSTENGVMVTRGRRWPLMIDPQGQANKWIKNMEGRGGRLKVLNLQMSDMARQIENAIQFGQPVLMQDILQEIDPILEPVLAKSFIKRGNQTLIKLGDKEVDYNFDFRLYLTTKLANPLYTPEISTKVMIVNFAVKEQGLEAQLLATVVKNERPDLDKQKNDLVVKVAAGKRTQAELEDTILHLLSTATGSLLDNVTLINTLDQSKTTWEEVNASLAVAEETQKKIEAASQLYRPCSVRASVLYFVLNDLSTIDPMYQFSLDAYNDLFLLSIKNSPKNDNLAERIKSLNDFHTYAVYKYTSRGLFERHKLLLSLQMCVRILQTANQVNTEEWQFFLRGGTVLDRSSQPNNPSQEWISEEAWDNITELDALPNFKGVVSSFESNLGEWEAWYRKGDPEASELPAEWESKCNELQRLILVRCLRPDRVIFAATTYVSNALGRKYVEPPVLDLAETLKDSTALSPLIFVLSAGVDPTDNLRKLATEKGMTSRFFTVALGQGQAPTATRLIEDGLREGNWVFLANCHLMTSWLPTLDKIIEGFETKQPHENFRLWLSSNPSPSFPIAILQRGIKMTTEPPKGLRANLLRLYNSVSDASYAQCKTQIKYQKLLFALTYFHSVLLERRKFRTLGFNIPYDFNDTDFSVSDDLLKSYLDSYEQTPWDALKYLIAEANYGGRVTDELDRRVLASYLNKFYCEDALAVPGYLLSPLSTYYVPENGPLQSFKDYILTLPAGDRPEAFGQHPNAEISYLIEDSKVLLDSLLSLQPRTEGAAGGAGTRREDVVMAIATDLLDQVPQPFNLEEVMKAKADDPSALHVVLFQEVERYNALLVAVRRSCVELQRGIKGLVVMSADLDLIFESLYAAKVPAAWLKTYPSLKPLGPWTRDLLQRIEQLATWVEETYPRVYWLSGFTYPTGFLTAVLQTTARKASVPIDTLSFEFSIINLDEREINAPPKEGVYIKGLFLEGAGWDFENGCLCEPNPMELIVPMPILLFRPVENKKRTAKGIYTCPLYLYPLRTGTRERPSFMINVDLRSGSADPDHWIMRGTALLLSLAT.

The tract at residues M1 to Y1806 is stem. Coiled coils occupy residues K192–D223, T1544–F1577, and T1704–K1727. AAA stretches follow at residues Y1807–R2028, R2089–N2350, F2458–G2706, and D2808–R3059. Residues G1845–T1852, G2127–S2134, G2497–T2504, and G2848–K2855 contribute to the ATP site. Coiled-coil stretches lie at residues A3107 to K3193, K3301 to E3384, and R3499 to Q3519. Residues A3107 to E3384 form a stalk region. AAA stretches follow at residues L3443–A3674 and A3890–S4109.

The I1 inner arm complex (also known as the f dynein complex) is a two-headed isoform composed of two heavy chains (1-alpha and 1-beta), three intermediate chains and three light chains. I1 occupies a specific position proximal to the first radial spoke and repeats every 96 nm along the length of the axoneme.

Its subcellular location is the cell projection. The protein localises to the cilium. The protein resides in the flagellum. It is found in the cytoplasm. It localises to the cytoskeleton. Its subcellular location is the flagellum axoneme. Functionally, force generating protein of eukaryotic cilia and flagella. Produces force towards the minus ends of microtubules. Dynein has ATPase activity; the force-producing power stroke is thought to occur on release of ADP. Required for assembly of the I1 inner arm complex and its targeting to the appropriate axoneme location. Also required for phototaxis. This chain is Dynein-1-beta heavy chain, flagellar inner arm I1 complex (DHC10), found in Chlamydomonas reinhardtii (Chlamydomonas smithii).